The following is a 560-amino-acid chain: DNA-directed primase/polymerase protein (560 aa).

Residues 1-22 (MNRKWEAKLKQIEERASHYERK) are a coiled coil. Substrate is bound by residues R76, 114-116 (DLE), and 165-169 (KFSRH). The Mn(2+) site is built by D114 and E116. The disordered stretch occupies residues 203–223 (EDDDSAPETTGHGFPHFSEAP). S255 carries the post-translational modification Phosphoserine. Residues 288-291 (RNFR) and K297 each bind substrate. Residues C419, H426, C446, and C451 each contribute to the Zn(2+) site. The Zinc knuckle motif motif lies at 419 to 452 (CENIGRAHKSNNIMILVDLKNEVWYQKCHDPVCK). The segment at 480-507 (TTDEADETRSNETQNPHKPSPSRLSTGA) is disordered. Residues 481-560 (TDEADETRSN…DELIIEVLQE (80 aa)) form an interaction with RPA1 region. A compositionally biased stretch (polar residues) spans 490–507 (NETQNPHKPSPSRLSTGA). 2 short sequence motifs (RPA1-binding motif) span residues 513–527 (WDNG…EATE) and 548–556 (EIPDELIIE).

Belongs to the eukaryotic-type primase small subunit family. As to quaternary structure, interacts with RPA1; leading to recruitment to chromatin and stimulate DNA primase activity. Interacts with SSBP1. Interacts with POLDIP2; leading to enhance DNA polymerase activity. The cofactor is Mn(2+).

It localises to the nucleus. The protein localises to the mitochondrion matrix. The protein resides in the chromosome. It carries out the reaction ssDNA + n NTP = ssDNA/pppN(pN)n-1 hybrid + (n-1) diphosphate.. The enzyme catalyses DNA(n) + a 2'-deoxyribonucleoside 5'-triphosphate = DNA(n+1) + diphosphate. In terms of biological role, DNA primase and DNA polymerase required to tolerate replication-stalling lesions by bypassing them. Required to facilitate mitochondrial and nuclear replication fork progression by initiating de novo DNA synthesis using dNTPs and acting as an error-prone DNA polymerase able to bypass certain DNA lesions. Shows a high capacity to tolerate DNA damage lesions such as 8oxoG and abasic sites in DNA. Provides different translesion synthesis alternatives when DNA replication is stalled: able to synthesize DNA primers downstream of lesions, such as ultraviolet (UV) lesions, R-loops and G-quadruplexes, to allow DNA replication to continue. Can also realign primers ahead of 'unreadable lesions' such as abasic sites and 6-4 photoproduct (6-4 pyrimidine-pyrimidinone), thereby skipping the lesion. Repriming avoids fork degradation while leading to accumulation of internal ssDNA gaps behind the forks. Also able to incorporate nucleotides opposite DNA lesions such as 8oxoG, like a regular translesion synthesis DNA polymerase. Also required for reinitiating stalled forks after UV damage during nuclear DNA replication. Required for mitochondrial DNA (mtDNA) synthesis and replication, by reinitiating synthesis after UV damage or in the presence of chain-terminating nucleotides. Prevents APOBEC family-mediated DNA mutagenesis by repriming downstream of abasic site to prohibit error-prone translesion synthesis. Has non-overlapping function with POLH. In addition to its role in DNA damage response, also required to maintain efficient nuclear and mitochondrial DNA replication in unperturbed cells. The chain is DNA-directed primase/polymerase protein from Homo sapiens (Human).